The primary structure comprises 142 residues: Large ribosomal subunit protein uL11 (142 aa).

It belongs to the universal ribosomal protein uL11 family. Part of the ribosomal stalk of the 50S ribosomal subunit. Interacts with L10 and the large rRNA to form the base of the stalk. L10 forms an elongated spine to which L12 dimers bind in a sequential fashion forming a multimeric L10(L12)X complex. One or more lysine residues are methylated.

Forms part of the ribosomal stalk which helps the ribosome interact with GTP-bound translation factors. In Aliivibrio fischeri (strain MJ11) (Vibrio fischeri), this protein is Large ribosomal subunit protein uL11.